Reading from the N-terminus, the 204-residue chain is Protein-L-isoaspartate O-methyltransferase (204 aa).

Belongs to the methyltransferase superfamily. L-isoaspartyl/D-aspartyl protein methyltransferase family. Monomer.

Its subcellular location is the cytoplasm. The catalysed reaction is [protein]-L-isoaspartate + S-adenosyl-L-methionine = [protein]-L-isoaspartate alpha-methyl ester + S-adenosyl-L-homocysteine. Its function is as follows. Catalyzes the methyl esterification of L-isoaspartyl residues in peptides and proteins that result from spontaneous decomposition of normal L-aspartyl and L-asparaginyl residues. It plays a role in the repair and/or degradation of damaged proteins. The sequence is that of Protein-L-isoaspartate O-methyltransferase (pcm) from Rhizobium meliloti (strain 1021) (Ensifer meliloti).